We begin with the raw amino-acid sequence, 293 residues long: MSESKAETPSKSAEKGVASLSTSAPPSSTTPTAQAKQTPPPVATTARPMASRLPRTIAAEGGGTEKKQSHLAEDRIAQYLPKQDAVDHSNLAALLQPFTEASYEREFDVKVNGIASKAELTAVAETWASRLNVPKENSAVLAQEIAIHCYHNGSSEQTDFNLKSSQVAGLNLEAAVGVIKEILTLRQFAAYYATFVWNWGIKNEIPPANWVAKGYTDETKYAAFDTFSYVGSPLGLRITPTRKPTNNEYMAASVNAREKIIQSRGKGMVTNSPMFSDGTTHQGIPLHPKLPLS.

Residues 1–14 are compositionally biased toward basic and acidic residues; it reads MSESKAETPSKSAE. The disordered stretch occupies residues 1–49; that stretch reads MSESKAETPSKSAEKGVASLSTSAPPSSTTPTAQAKQTPPPVATTARPM. The span at 18–37 shows a compositional bias: low complexity; sequence ASLSTSAPPSSTTPTAQAKQ.

It belongs to the potexvirus capsid protein family. In terms of assembly, interacts with host NbANKr; this interaction targets the capsid protein to the host chloroplast.

The protein localises to the virion. Its subcellular location is the host chloroplast envelope. Required for genome encapsidation. Forms ribonucleoprotein complexes along with TGB1 helicase and viral RNA. This is Capsid protein (ORF5) from Lolium latent virus (isolate Lolium/USA/US1/-) (LoLV).